The chain runs to 354 residues: Nucleoporin seh1 (354 aa).

WD repeat units follow at residues 10-49 (DHKDVIHDVVFDYYGRRMATCSSDQTVKIWDEDGQGKWNV), 55-96 (AHSG…KVSS), 112-153 (DSRT…NLSQ), 161-209 (SNKL…RKCV), 216-259 (DITD…TDIS), and 270-309 (EHNCPVWRVCWNMLATMLISTGDDGCVRLWRMNYNRQWRC).

This sequence belongs to the WD repeat SEC13 family. As to quaternary structure, probable component of the nuclear pore complex (NPC). Component of the GATOR complex consisting of mio, Nup44A/Seh1, Im11, Nplr3, Nplr2, Wdr24, Wdr59 and Sec13. Within the GATOR complex, probable component of the GATOR2 subcomplex which is likely composed of mio, Nup44A/Seh1, Wdr24, Wdr59 and Sec13. Interacts with mio. Interacts with Wdr24. The GATOR2 complex associates with unmet in the absence of S-adenosyl-L-methionine; the mio-Wdr24-Nup44A subcomplex is essential and sufficient for this interaction while Wdr59 and Sec13 are dispensable. This association acts as a nutrient sensor to inhibit mTORC1 signaling in the absence of methionine. Expressed in ovarian cysts.

It is found in the nucleus envelope. The protein resides in the lysosome. Probable component of the nuclear pore complex (NPC). Involved in maintaining the localization of another nucleoporin Mgtor to the nuclear envelope of early meiotic female germline cells. It is not involved in recruiting the nucleoporins Mgtor, Nup107, Nup153 and FG-containing nucleoporins to the NPC. Its function is as follows. An essential component of the GATOR subcomplex GATOR2 which functions as an activator of the amino acid-sensing branch of the mTORC1 signaling pathway. The two GATOR subcomplexes, GATOR1 and GATOR2, regulate the mTORC1 pathway in order to mediate metabolic homeostasis, female gametogenesis and the response to amino acid limitation and complete starvation. GATOR2 activates the mTORC1 signaling pathway through the inhibition of the GATOR1 subcomplex, controlling the switch to cell proliferation growth under nutrient replete conditions and growth during female oocyte development. This component is required for activating mTORC1 specifically in germline cells to promote cell growth and maintain the oocyte fate, probably influences the organization and/or function of microtubules within ovarian cysts, and promotes accumulation of another GATOR2 complex member mio in germline and somatic tissues. GATOR1 and GATOR2 act at different stages of oogenesis to regulate mTORC1 in order to control meiotic entry and promote oocyte growth and development. After exactly four mitotic cyst divisions, the GATOR1 complex members (Iml1, Nprl2 and Nprl3) down-regulate mTORC1 to slow cellular metabolism and promote the mitotic/meiotic transition. At later stages of oogenesis, the mio and Nup44A components of the GATOR2 complex inhibit GATOR1 and thus activate mTORC1 to promote meiotic progression, and drive oocyte growth and development. In addition to its role in the regulation of the mTORC1 complex, functions independently of mTORC1 to prevent the inappropriate accumulation of autolysosomes in germline tissues. In Drosophila melanogaster (Fruit fly), this protein is Nucleoporin seh1.